A 486-amino-acid chain; its full sequence is Ribulose bisphosphate carboxylase large chain (486 aa).

Substrate contacts are provided by N126 and T176. K178 (proton acceptor) is an active-site residue. K180 contributes to the substrate binding site. Mg(2+) contacts are provided by K204, D206, and E207. Residue K204 is modified to N6-carboxylysine. Catalysis depends on H296, which acts as the Proton acceptor. Substrate is bound by residues R297, H329, and S381.

The protein belongs to the RuBisCO large chain family. Type I subfamily. Heterohexadecamer of 8 large chains and 8 small chains. It depends on Mg(2+) as a cofactor.

It carries out the reaction 2 (2R)-3-phosphoglycerate + 2 H(+) = D-ribulose 1,5-bisphosphate + CO2 + H2O. The enzyme catalyses D-ribulose 1,5-bisphosphate + O2 = 2-phosphoglycolate + (2R)-3-phosphoglycerate + 2 H(+). Its function is as follows. RuBisCO catalyzes two reactions: the carboxylation of D-ribulose 1,5-bisphosphate, the primary event in carbon dioxide fixation, as well as the oxidative fragmentation of the pentose substrate. Both reactions occur simultaneously and in competition at the same active site. This is Ribulose bisphosphate carboxylase large chain from Cupriavidus taiwanensis (strain DSM 17343 / BCRC 17206 / CCUG 44338 / CIP 107171 / LMG 19424 / R1) (Ralstonia taiwanensis (strain LMG 19424)).